Consider the following 643-residue polypeptide: Threonine--tRNA ligase (643 aa).

The TGS domain occupies 1–61 (MIEIFIEDLN…NQSGNLKFLK (61 aa)). Positions 246–539 (DHRKIGKDLE…LLEHYAGFLP (294 aa)) are catalytic. Zn(2+)-binding residues include Cys339, His390, and His516.

Belongs to the class-II aminoacyl-tRNA synthetase family. As to quaternary structure, homodimer. The cofactor is Zn(2+).

The protein localises to the cytoplasm. It catalyses the reaction tRNA(Thr) + L-threonine + ATP = L-threonyl-tRNA(Thr) + AMP + diphosphate + H(+). Its function is as follows. Catalyzes the attachment of threonine to tRNA(Thr) in a two-step reaction: L-threonine is first activated by ATP to form Thr-AMP and then transferred to the acceptor end of tRNA(Thr). Also edits incorrectly charged L-seryl-tRNA(Thr). The sequence is that of Threonine--tRNA ligase from Sulfurihydrogenibium sp. (strain YO3AOP1).